The following is a 383-amino-acid chain: Acetylornithine deacetylase (383 aa).

A Zn(2+)-binding site is contributed by histidine 80. Aspartate 82 is a catalytic residue. Aspartate 112 serves as a coordination point for Zn(2+). Glutamate 144 is a catalytic residue. Glutamate 145, glutamate 169, and histidine 355 together coordinate Zn(2+).

This sequence belongs to the peptidase M20A family. ArgE subfamily. As to quaternary structure, homodimer. Requires Zn(2+) as cofactor. The cofactor is Co(2+). It depends on glutathione as a cofactor.

It is found in the cytoplasm. It carries out the reaction N(2)-acetyl-L-ornithine + H2O = L-ornithine + acetate. It functions in the pathway amino-acid biosynthesis; L-arginine biosynthesis; L-ornithine from N(2)-acetyl-L-ornithine (linear): step 1/1. Catalyzes the hydrolysis of the amide bond of N(2)-acetylated L-amino acids. Cleaves the acetyl group from N-acetyl-L-ornithine to form L-ornithine, an intermediate in L-arginine biosynthesis pathway, and a branchpoint in the synthesis of polyamines. The sequence is that of Acetylornithine deacetylase from Escherichia coli O127:H6 (strain E2348/69 / EPEC).